Consider the following 209-residue polypeptide: Peroxynitrite isomerase 2 (209 aa).

The short motif at 56–62 (GVWRGEG) is the GXWXGXG element. The heme b site is built by Lys172 and His199.

This sequence belongs to the nitrobindin family. As to quaternary structure, homodimer. Heme b is required as a cofactor.

It catalyses the reaction peroxynitrite = nitrate. It functions in the pathway nitrogen metabolism. Its function is as follows. Heme-binding protein able to scavenge peroxynitrite and to protect free L-tyrosine against peroxynitrite-mediated nitration, by acting as a peroxynitrite isomerase that converts peroxynitrite to nitrate. Therefore, this protein likely plays a role in peroxynitrite sensing and in the detoxification of reactive nitrogen and oxygen species (RNS and ROS, respectively). Is able to bind nitric oxide (NO) in vitro, but may act as a sensor of peroxynitrite levels in vivo. The sequence is that of Peroxynitrite isomerase 2 from Mycolicibacterium gilvum (strain PYR-GCK) (Mycobacterium gilvum (strain PYR-GCK)).